Consider the following 277-residue polypeptide: Small ribosomal subunit protein uS3 (277 aa).

The KH type-2 domain maps to 43–111; that stretch reads IRQLMSTGME…QVQLNILEVK (69 aa). Residues 218–228 are compositionally biased toward low complexity; the sequence is QQAAAAPSRGR. The segment at 218 to 277 is disordered; it reads QQAAAAPSRGRGASDRPGRPGGADRGDRRRRTDRPAAEAAPAAEAPAVEAAAPAVEGGQA. Basic and acidic residues predominate over residues 229–244; sequence GASDRPGRPGGADRGD. Low complexity predominate over residues 254–277; sequence AEAAPAAEAPAVEAAAPAVEGGQA.

The protein belongs to the universal ribosomal protein uS3 family. In terms of assembly, part of the 30S ribosomal subunit. Forms a tight complex with proteins S10 and S14.

In terms of biological role, binds the lower part of the 30S subunit head. Binds mRNA in the 70S ribosome, positioning it for translation. The sequence is that of Small ribosomal subunit protein uS3 from Arthrobacter sp. (strain FB24).